The sequence spans 213 residues: High frequency lysogenization protein HflD homolog (213 aa).

The protein belongs to the HflD family.

It is found in the cytoplasm. The protein resides in the cell inner membrane. This chain is High frequency lysogenization protein HflD homolog, found in Nitrosococcus oceani (strain ATCC 19707 / BCRC 17464 / JCM 30415 / NCIMB 11848 / C-107).